The primary structure comprises 128 residues: Large ribosomal subunit protein uL22 (128 aa).

It belongs to the universal ribosomal protein uL22 family. In terms of assembly, part of the 50S ribosomal subunit.

This protein binds specifically to 23S rRNA; its binding is stimulated by other ribosomal proteins, e.g. L4, L17, and L20. It is important during the early stages of 50S assembly. It makes multiple contacts with different domains of the 23S rRNA in the assembled 50S subunit and ribosome. Functionally, the globular domain of the protein is located near the polypeptide exit tunnel on the outside of the subunit, while an extended beta-hairpin is found that lines the wall of the exit tunnel in the center of the 70S ribosome. The sequence is that of Large ribosomal subunit protein uL22 from Nitrobacter hamburgensis (strain DSM 10229 / NCIMB 13809 / X14).